A 304-amino-acid chain; its full sequence is Glycine--tRNA ligase alpha subunit (304 aa).

The protein belongs to the class-II aminoacyl-tRNA synthetase family. As to quaternary structure, tetramer of two alpha and two beta subunits.

It is found in the cytoplasm. It catalyses the reaction tRNA(Gly) + glycine + ATP = glycyl-tRNA(Gly) + AMP + diphosphate. The chain is Glycine--tRNA ligase alpha subunit from Tolumonas auensis (strain DSM 9187 / NBRC 110442 / TA 4).